The sequence spans 119 residues: Putative membrane protein insertion efficiency factor (119 aa).

This sequence belongs to the UPF0161 family.

It localises to the cell inner membrane. Its function is as follows. Could be involved in insertion of integral membrane proteins into the membrane. This chain is Putative membrane protein insertion efficiency factor, found in Brucella anthropi (strain ATCC 49188 / DSM 6882 / CCUG 24695 / JCM 21032 / LMG 3331 / NBRC 15819 / NCTC 12168 / Alc 37) (Ochrobactrum anthropi).